Consider the following 296-residue polypeptide: MIIHPNFDPVAIHLGPLAVRWYGLMYLVGFIAAIVVGRIRLKLPHVAAQGWTAKDIDDMMFYGVLGTVLGGRLGYVLFYKADFYFSHPLDVFKVWEGGMSFHGGFLGVTLAMMLFAWQRKRHWLQVTDFVAPMVPTGLAAGRLGNFINGELWGRVTDPSAPWAMLFPGAMRDDAAWLPKHPELVEKWHLADVFMQYQMLPRHPSQLYEIALEGIVLFFALFLFARKSRPMGAVSALFLIGYGLARFTVEFAREPDDFLGLLALGLSMGQWLSLPMILAGVALMVWAYRRRAANAAA.

3 helical membrane passes run 17–37, 59–79, and 97–117; these read LAVRWYGLMYLVGFIAAIVVG, MMFYGVLGTVLGGRLGYVLFY, and GGMSFHGGFLGVTLAMMLFAW. Residue R142 participates in a 1,2-diacyl-sn-glycero-3-phospho-(1'-sn-glycerol) binding. The next 2 membrane-spanning stretches (helical) occupy residues 230–250 and 257–277; these read MGAVSALFLIGYGLARFTVEF and FLGLLALGLSMGQWLSLPMIL.

It belongs to the Lgt family.

It is found in the cell inner membrane. The enzyme catalyses L-cysteinyl-[prolipoprotein] + a 1,2-diacyl-sn-glycero-3-phospho-(1'-sn-glycerol) = an S-1,2-diacyl-sn-glyceryl-L-cysteinyl-[prolipoprotein] + sn-glycerol 1-phosphate + H(+). It participates in protein modification; lipoprotein biosynthesis (diacylglyceryl transfer). In terms of biological role, catalyzes the transfer of the diacylglyceryl group from phosphatidylglycerol to the sulfhydryl group of the N-terminal cysteine of a prolipoprotein, the first step in the formation of mature lipoproteins. This chain is Phosphatidylglycerol--prolipoprotein diacylglyceryl transferase, found in Burkholderia lata (strain ATCC 17760 / DSM 23089 / LMG 22485 / NCIMB 9086 / R18194 / 383).